We begin with the raw amino-acid sequence, 396 residues long: ATP-dependent RNA helicase eIF4A (396 aa).

A Q motif motif is present at residues 23–51 (YEFDDMNLNEKLLRGVFGYGFNKPSAIQQ). The Helicase ATP-binding domain occupies 54–223 (IMPIIEGNDV…AKFMQNPVRI (170 aa)). 67 to 74 (AQSGTGKT) contacts ATP. The DEAD box signature appears at 171 to 174 (DEAD). Residues 234-395 (GIKQFYVNVE…ELPSDIGTLF (162 aa)) enclose the Helicase C-terminal domain.

This sequence belongs to the DEAD box helicase family. eIF4A subfamily. Component of the eIF4F complex, which composition varies with external and internal environmental conditions. It is composed of at least eIF4A, eIF4E and eIF4G.

The protein resides in the cytoplasm. It carries out the reaction ATP + H2O = ADP + phosphate + H(+). ATP-dependent RNA helicase which is a subunit of the eIF4F complex involved in cap recognition and is required for mRNA binding to ribosome. In the current model of translation initiation, eIF4A unwinds RNA secondary structures in the 5'-UTR of mRNAs which is necessary to allow efficient binding of the small ribosomal subunit, and subsequent scanning for the initiator codon. The polypeptide is ATP-dependent RNA helicase eIF4A (TIF1) (Candida glabrata (strain ATCC 2001 / BCRC 20586 / JCM 3761 / NBRC 0622 / NRRL Y-65 / CBS 138) (Yeast)).